We begin with the raw amino-acid sequence, 397 residues long: Lysophospholipid transporter LplT (397 aa).

Over 1-17 (MSESVHTNTSLWSKGMK) the chain is Periplasmic. A helical transmembrane segment spans residues 18–38 (AVIVAQFLSAFGDNALLFATL). Residues 39 to 52 (ALLKAQFYPEWSQP) are Cytoplasmic-facing. Residues 53-73 (ILQMVFVGAYILFAPFVGQVA) traverse the membrane as a helical segment. At 74-90 (DSFAKGRVMMFANGLKL) the chain is on the periplasmic side. A helical membrane pass occupies residues 91–111 (LGAASICFGINPFLGYTLVGV). Over 112-144 (GAAAYSPAKYGILGELTTGSKLVKANGLMEAST) the chain is Cytoplasmic. A helical transmembrane segment spans residues 145–165 (IAAILLGSVAGGVLADWHILV). Residue alanine 166 is a topological domain, periplasmic. The helical transmembrane segment at 167–187 (LAACALAYGGAVVANIYIPKL) threads the bilayer. Topologically, residues 188–226 (AAARPGQSWNLISMTRSFLNACTSLWRNGETRFSLVGTS) are cytoplasmic. A helical transmembrane segment spans residues 227-247 (LFWGAGVTLRFLLVLWVPVAL). Over 248 to 256 (GITDNATPT) the chain is Periplasmic. The helical transmembrane segment at 257-277 (YLNAMVAIGIVVGAGAAAKLV) threads the bilayer. Topologically, residues 278-280 (TLE) are cytoplasmic. A helical transmembrane segment spans residues 281–301 (TVSRCMPAGILIGVVVLIFSL). Topologically, residues 302-304 (QHE) are periplasmic. Residues 305–325 (LLPAYALLMLIGVLGGFFVVP) traverse the membrane as a helical segment. Residues 326 to 343 (LNALLQERGKKSVGAGNA) are Cytoplasmic-facing. The helical transmembrane segment at 344-364 (IAVQNLGENSAMLLMLGIYSL) threads the bilayer. The Periplasmic segment spans residues 365 to 366 (AV). The helical transmembrane segment at 367–387 (MVGIPVVPIGIGFGALFALAI) threads the bilayer. The Cytoplasmic segment spans residues 388–397 (TALWIWQRRH).

Belongs to the major facilitator superfamily. LplT (TC 2.A.1.42) family.

The protein resides in the cell inner membrane. Catalyzes the facilitated diffusion of 2-acyl-glycero-3-phosphoethanolamine (2-acyl-GPE) into the cell. The sequence is that of Lysophospholipid transporter LplT from Escherichia coli O6:K15:H31 (strain 536 / UPEC).